Reading from the N-terminus, the 250-residue chain is Probable transcriptional regulatory protein SAV_6832 (250 aa).

It belongs to the TACO1 family.

It localises to the cytoplasm. The sequence is that of Probable transcriptional regulatory protein SAV_6832 from Streptomyces avermitilis (strain ATCC 31267 / DSM 46492 / JCM 5070 / NBRC 14893 / NCIMB 12804 / NRRL 8165 / MA-4680).